Here is a 288-residue protein sequence, read N- to C-terminus: Syntaxin-1B (288 aa).

A compositionally biased stretch (basic and acidic residues) spans 1–13 (MKDRTQELRSAKD). The interval 1-20 (MKDRTQELRSAKDSDDEEEV) is disordered. The Cytoplasmic segment spans residues 1-264 (MKDRTQELRS…KYQSKARRKK (264 aa)). Phosphoserine is present on residues S10 and S14. Residues 29 to 104 (MDEFFEQVEE…IEQSIEQEEG (76 aa)) are a coiled coil. One can recognise a t-SNARE coiled-coil homology domain in the interval 191-253 (LNEIETRHNE…ERAVSDTKKA (63 aa)). A helical; Anchor for type IV membrane protein transmembrane segment spans residues 265–288 (IMIIICCVVLGVVLASSIGGTLGL).

This sequence belongs to the syntaxin family. As to quaternary structure, interacts with OTOF. Interacts with SYT6 and SYT8; the interaction is Ca(2+)-dependent. In terms of processing, phosphorylated by CK2. Post-translationally, (Microbial infection) Targeted and hydrolyzed by C.botulinum neurotoxin type C (BoNT/C); cleavage by BoNT/C inhibits neurotransmitter release. Probably hydrolyzes the 252-Lys-|-Ala-253 bond.

The protein resides in the membrane. Its function is as follows. Potentially involved in docking of synaptic vesicles at presynaptic active zones. May mediate Ca(2+)-regulation of exocytosis acrosomal reaction in sperm. The polypeptide is Syntaxin-1B (STX1B) (Bos taurus (Bovine)).